The sequence spans 86 residues: Large ribosomal subunit protein bL31B (86 aa).

Belongs to the bacterial ribosomal protein bL31 family. Type B subfamily. Part of the 50S ribosomal subunit.

The polypeptide is Large ribosomal subunit protein bL31B (Citrobacter koseri (strain ATCC BAA-895 / CDC 4225-83 / SGSC4696)).